A 242-amino-acid polypeptide reads, in one-letter code: Ribonuclease 3 (242 aa).

The RNase III domain occupies 10–146 (LQNFNKKFAD…FVGALYLDQG (137 aa)). Glu59 lines the Mg(2+) pocket. Asp63 is an active-site residue. Mg(2+) is bound by residues Asp132 and Glu135. Glu135 is an active-site residue. One can recognise a DRBM domain in the interval 172 to 241 (DFKTQFQELI…AEKAYNDMKK (70 aa)). Residues 216-242 (VAKGQGRTKKESEQKAAEKAYNDMKKK) are disordered. Basic and acidic residues predominate over residues 223-242 (TKKESEQKAAEKAYNDMKKK).

It belongs to the ribonuclease III family. As to quaternary structure, homodimer. Mg(2+) serves as cofactor.

It is found in the cytoplasm. It carries out the reaction Endonucleolytic cleavage to 5'-phosphomonoester.. Digests double-stranded RNA. Involved in the processing of primary rRNA transcript to yield the immediate precursors to the large and small rRNAs (23S and 16S). Processes some mRNAs, and tRNAs when they are encoded in the rRNA operon. Processes pre-crRNA and tracrRNA of type II CRISPR loci if present in the organism. This is Ribonuclease 3 from Staphylococcus carnosus (strain TM300).